The chain runs to 233 residues: MLHSPVFPAFGHHLADYPAMPLATDLPRTPKSSFNIDSILSRTDRPASKVSMEMPSWQPPSPPFHYSYGMVPYPPMWLIKPTVGYPNMAQAQPMRMPRGECLCPDPACKHRGLSYSHCPNGALNPLSWRTGPCKLKRIRTVFTPEQLERLEKEFLKQQYMVGTERVDLASTLNLTETQVKVWFQNRRIKWRKQSLEQKKAKLSQFGVILADSSDHTDDSRETEEEEDDVDVEL.

The homeobox DNA-binding region spans 135–194; the sequence is LKRIRTVFTPEQLERLEKEFLKQQYMVGTERVDLASTLNLTETQVKVWFQNRRIKWRKQS. The tract at residues 212–233 is disordered; it reads SSDHTDDSRETEEEEDDVDVEL. Acidic residues predominate over residues 220–233; the sequence is RETEEEEDDVDVEL.

In terms of tissue distribution, localized to the dorsal lip of the blastopore (Spemann organizer) during early gastrulation, after which expression continues in tissues derived from the organizer. Expressed in the notochord during mid-gastrulation, the chordoneural hinge, notochord and ventral spinal cord of the tailbud at stage 22, and finally the tip of the tail in the tadpole (stage 35).

Its subcellular location is the nucleus. Its function is as follows. Transcriptional repressor. Plays a fundamental role in notochord formation, acting within the mesodermal region. Acts downstream of gsc and upstream of chrd and foxa4-A/pintallavis. The polypeptide is Homeobox protein not2 (Xenopus laevis (African clawed frog)).